A 312-amino-acid polypeptide reads, in one-letter code: tRNA pseudouridine synthase B (312 aa).

Catalysis depends on Asp-37, which acts as the Nucleophile.

This sequence belongs to the pseudouridine synthase TruB family. Type 1 subfamily.

The catalysed reaction is uridine(55) in tRNA = pseudouridine(55) in tRNA. Functionally, responsible for synthesis of pseudouridine from uracil-55 in the psi GC loop of transfer RNAs. The chain is tRNA pseudouridine synthase B from Thermus thermophilus (strain ATCC BAA-163 / DSM 7039 / HB27).